We begin with the raw amino-acid sequence, 424 residues long: UPF0229 protein Sde_0732 (424 aa).

A disordered region spans residues 52–109; it reads IGIPSKDISEPVFHHDSGGVDTRVLPGNDQFHSGDRIQRPPSGQGGGGSGKGASDSGE. A compositionally biased stretch (basic and acidic residues) spans 58–69; it reads DISEPVFHHDSG.

This sequence belongs to the UPF0229 family.

This is UPF0229 protein Sde_0732 from Saccharophagus degradans (strain 2-40 / ATCC 43961 / DSM 17024).